The primary structure comprises 112 residues: MSIVIAAKGLGLRSTPAKLNLVADLIRGKDVAVAAMYLKFCKKKAALLIDKVLKSAIANARANYGVDADNLYVKEVLVGKAFTLRRVQPRARGRACRISKRYGSVVVKLLER.

The protein belongs to the universal ribosomal protein uL22 family. In terms of assembly, part of the 50S ribosomal subunit.

In terms of biological role, this protein binds specifically to 23S rRNA; its binding is stimulated by other ribosomal proteins, e.g. L4, L17, and L20. It is important during the early stages of 50S assembly. It makes multiple contacts with different domains of the 23S rRNA in the assembled 50S subunit and ribosome. Functionally, the globular domain of the protein is located near the polypeptide exit tunnel on the outside of the subunit, while an extended beta-hairpin is found that lines the wall of the exit tunnel in the center of the 70S ribosome. The sequence is that of Large ribosomal subunit protein uL22 from Anaplasma phagocytophilum (strain HZ).